A 379-amino-acid chain; its full sequence is Cytochrome b (379 aa).

Helical transmembrane passes span Phe33–Met53, Trp77–Val98, Trp113–Leu133, and Phe178–Leu198. Residues His83 and His97 each coordinate heme b. Residues His182 and His196 each contribute to the heme b site. Residue His201 participates in a ubiquinone binding. A run of 4 helical transmembrane segments spans residues Thr226 to Phe246, Leu288 to Asn308, Ile320 to Gly340, and Phe347 to Pro367.

The protein belongs to the cytochrome b family. In terms of assembly, the cytochrome bc1 complex contains 11 subunits: 3 respiratory subunits (MT-CYB, CYC1 and UQCRFS1), 2 core proteins (UQCRC1 and UQCRC2) and 6 low-molecular weight proteins (UQCRH/QCR6, UQCRB/QCR7, UQCRQ/QCR8, UQCR10/QCR9, UQCR11/QCR10 and a cleavage product of UQCRFS1). This cytochrome bc1 complex then forms a dimer. It depends on heme b as a cofactor.

It localises to the mitochondrion inner membrane. In terms of biological role, component of the ubiquinol-cytochrome c reductase complex (complex III or cytochrome b-c1 complex) that is part of the mitochondrial respiratory chain. The b-c1 complex mediates electron transfer from ubiquinol to cytochrome c. Contributes to the generation of a proton gradient across the mitochondrial membrane that is then used for ATP synthesis. In Akodon azarae (Azara's grass mouse), this protein is Cytochrome b (MT-CYB).